Here is a 340-residue protein sequence, read N- to C-terminus: UDP-glucose 4-epimerase (340 aa).

NAD(+) contacts are provided by residues 12–13, 32–37, 59–60, 81–85, asparagine 100, serine 125, tyrosine 150, lysine 154, and phenylalanine 179; these read FI, DNYGNS, DV, and FAGLK. Serine 125 and tyrosine 150 together coordinate substrate. Catalysis depends on tyrosine 150, which acts as the Proton acceptor. Substrate is bound by residues asparagine 180, 200–201, 217–219, arginine 232, and 292–295; these read NL, QVY, and RPGD.

It belongs to the NAD(P)-dependent epimerase/dehydratase family. In terms of assembly, homodimer. It depends on NAD(+) as a cofactor.

The catalysed reaction is UDP-alpha-D-glucose = UDP-alpha-D-galactose. It participates in carbohydrate metabolism; galactose metabolism. Its function is as follows. Involved in the metabolism of galactose. Catalyzes the conversion of UDP-galactose (UDP-Gal) to UDP-glucose (UDP-Glc) through a mechanism involving the transient reduction of NAD. Can also epimerize UDP-GalNAc to UDP-GlcNAc. Involved in the lacto-N-biose I/galacto-N-biose (LNB/GNB) degradation pathway, which is important for host intestinal colonization by bifidobacteria. The chain is UDP-glucose 4-epimerase (lnpD) from Bifidobacterium longum subsp. longum (strain ATCC 15707 / DSM 20219 / JCM 1217 / NCTC 11818 / E194b).